Consider the following 91-residue polypeptide: MFQKQERIGLVVYLYYNRDARKLSKFGDLYYHSKRSRYLIIYINKNDLDTKLEEMRRLKCVKDIRPSAFDDIDRQFVGNLHRDETNNHQKG.

This sequence belongs to the UPF0298 family.

The protein resides in the cytoplasm. The protein is UPF0298 protein spyM18_0447 of Streptococcus pyogenes serotype M18 (strain MGAS8232).